Consider the following 168-residue polypeptide: ATP synthase subunit b (168 aa).

A helical transmembrane segment spans residues 10 to 30 (LYLGDMLFYLVSFLIMAALVW). Residues 61-80 (EAQKLAAKRQEELKGSRQEA) are disordered.

Belongs to the ATPase B chain family. In terms of assembly, F-type ATPases have 2 components, F(1) - the catalytic core - and F(0) - the membrane proton channel. F(1) has five subunits: alpha(3), beta(3), gamma(1), delta(1), epsilon(1). F(0) has three main subunits: a(1), b(2) and c(10-14). The alpha and beta chains form an alternating ring which encloses part of the gamma chain. F(1) is attached to F(0) by a central stalk formed by the gamma and epsilon chains, while a peripheral stalk is formed by the delta and b chains.

The protein localises to the cell membrane. Functionally, f(1)F(0) ATP synthase produces ATP from ADP in the presence of a proton or sodium gradient. F-type ATPases consist of two structural domains, F(1) containing the extramembraneous catalytic core and F(0) containing the membrane proton channel, linked together by a central stalk and a peripheral stalk. During catalysis, ATP synthesis in the catalytic domain of F(1) is coupled via a rotary mechanism of the central stalk subunits to proton translocation. Component of the F(0) channel, it forms part of the peripheral stalk, linking F(1) to F(0). The chain is ATP synthase subunit b from Limosilactobacillus fermentum (strain NBRC 3956 / LMG 18251) (Lactobacillus fermentum).